Reading from the N-terminus, the 178-residue chain is Caveolin-1 (178 aa).

Ser2 carries the post-translational modification N-acetylserine. Ser2 carries the phosphoserine modification. The tract at residues 2–94 (SGGKYVDSEG…WKASFTTFTV (93 aa)) is required for homooligomerization. Topologically, residues 2-104 (SGGKYVDSEG…TKYWFYRLLS (103 aa)) are cytoplasmic. N6-acetyllysine; alternate is present on Lys5. Lys5 is covalently cross-linked (Glycyl lysine isopeptide (Lys-Gly) (interchain with G-Cter in ubiquitin); alternate). A Phosphotyrosine modification is found at Tyr6. Residue Ser9 is modified to Phosphoserine. At Tyr14 the chain carries Phosphotyrosine; by ABL1. Tyr25 is subject to Phosphotyrosine. Residues Lys26, Lys30, Lys39, Lys47, and Lys57 each participate in a glycyl lysine isopeptide (Lys-Gly) (interchain with G-Cter in ubiquitin) cross-link. The interval 82–94 (DGIWKASFTTFTV) is interaction with CAVIN3. Positions 105–125 (ALFGIPMALIWGIYFAILSFL) form an intramembrane region, helical. Residues 126–178 (HIWAVVPCIKSFLIEIQCVSRVYSIYVHTFCDPFFEAVGKIFSSIRINMQKEI) lie on the Cytoplasmic side of the membrane. The interacts with SPRY1, SPRY2, SPRY3 and SPRY4 stretch occupies residues 131–142 (VPCIKSFLIEIQ). S-palmitoyl cysteine attachment occurs at residues Cys133, Cys143, and Cys156. The interacts with SPRY1, SPRY2, and SPRY4 stretch occupies residues 149-160 (SIYVHTFCDPFF). An interacts with SPRY1, SPRY2, SPRY3 and SPRY4 region spans residues 167–178 (FSSIRINMQKEI).

Belongs to the caveolin family. Homooligomer. Interacts with GLIPR2. Interacts with NOSTRIN. Interacts with SNAP25 and STX1A. Interacts (via the N-terminus) with DPP4; the interaction is direct. Interacts with CTNNB1, CDH1 and JUP. Interacts with PACSIN2; this interaction induces membrane tubulation. Interacts with SLC7A9. Interacts with BMX and BTK. Interacts with TGFBR1. Interacts with CAVIN3 (via leucine-zipper domain) in a cholesterol-sensitive manner. Interacts with CAVIN1. Interacts with EHD2 in a cholesterol-dependent manner. Forms a ternary complex with UBXN6 and VCP; mediates CAV1 targeting to lysosomes for degradation. Interacts with ABCG1; this interaction regulates ABCG1-mediated cholesterol efflux. Interacts with NEU3; this interaction enhances NEU3 sialidase activity within caveola. Interacts (via C-terminus) with SPRY1, SPRY2 (via C-terminus), SPRY3, and SPRY4. Interacts with IGFBP5; this interaction allows trafficking of IGFBP5 from the plasma membrane to the nucleus. Phosphorylated at Tyr-14 by ABL1 in response to oxidative stress. In terms of processing, ubiquitinated. Undergo monoubiquitination and multi- and/or polyubiquitination. Monoubiquitination of N-terminal lysines promotes integration in a ternary complex with UBXN6 and VCP which promotes oligomeric CAV1 targeting to lysosomes for degradation. Ubiquitinated by ZNRF1; leading to degradation and modulation of the TLR4-mediated immune response.

It localises to the golgi apparatus membrane. The protein resides in the cell membrane. Its subcellular location is the membrane. It is found in the caveola. The protein localises to the membrane raft. Functionally, may act as a scaffolding protein within caveolar membranes. Forms a stable heterooligomeric complex with CAV2 that targets to lipid rafts and drives caveolae formation. Mediates the recruitment of CAVIN proteins (CAVIN1/2/3/4) to the caveolae. Interacts directly with G-protein alpha subunits and can functionally regulate their activity. Involved in the costimulatory signal essential for T-cell receptor (TCR)-mediated T-cell activation. Its binding to DPP4 induces T-cell proliferation and NF-kappa-B activation in a T-cell receptor/CD3-dependent manner. Recruits CTNNB1 to caveolar membranes and may regulate CTNNB1-mediated signaling through the Wnt pathway. Negatively regulates TGFB1-mediated activation of SMAD2/3 by mediating the internalization of TGFBR1 from membrane rafts leading to its subsequent degradation. Binds 20(S)-hydroxycholesterol (20(S)-OHC). The polypeptide is Caveolin-1 (CAV1) (Mustela putorius furo (European domestic ferret)).